A 175-amino-acid chain; its full sequence is Large ribosomal subunit protein uL18 (175 aa).

Belongs to the universal ribosomal protein uL18 family. Part of the 50S ribosomal subunit. Contacts the 5S and 23S rRNAs.

In terms of biological role, this is one of the proteins that bind and probably mediate the attachment of the 5S RNA into the large ribosomal subunit, where it forms part of the central protuberance. The sequence is that of Large ribosomal subunit protein uL18 from Methanosphaerula palustris (strain ATCC BAA-1556 / DSM 19958 / E1-9c).